Here is a 304-residue protein sequence, read N- to C-terminus: UDP-N-acetylenolpyruvoylglucosamine reductase (304 aa).

The region spanning 34–198 is the FAD-binding PCMH-type domain; it reads IGGKADFLVW…LEVVFALRPG (165 aa). Residue arginine 177 is part of the active site. Serine 227 (proton donor) is an active-site residue. Residue glutamate 297 is part of the active site.

It belongs to the MurB family. It depends on FAD as a cofactor.

It is found in the cytoplasm. The catalysed reaction is UDP-N-acetyl-alpha-D-muramate + NADP(+) = UDP-N-acetyl-3-O-(1-carboxyvinyl)-alpha-D-glucosamine + NADPH + H(+). Its pathway is cell wall biogenesis; peptidoglycan biosynthesis. Its function is as follows. Cell wall formation. This Geobacillus kaustophilus (strain HTA426) protein is UDP-N-acetylenolpyruvoylglucosamine reductase.